The primary structure comprises 405 residues: Cytochrome P450 109 (405 aa).

Residue cysteine 351 participates in heme binding.

This sequence belongs to the cytochrome P450 family. Requires heme as cofactor.

Cytochromes P450 are a group of heme-thiolate monooxygenases. They oxidize a variety of structurally unrelated compounds, including steroids, fatty acids, and xenobiotics. The sequence is that of Cytochrome P450 109 (cyp109) from Bacillus spizizenii (strain ATCC 23059 / NRRL B-14472 / W23) (Bacillus subtilis subsp. spizizenii).